Reading from the N-terminus, the 42-residue chain is Photosystem I reaction center subunit IX (42 aa).

A helical membrane pass occupies residues 7–27; that stretch reads YLSVAPVLSTLWFGSLAGLLI.

This sequence belongs to the PsaJ family.

The protein localises to the plastid. The protein resides in the chloroplast thylakoid membrane. May help in the organization of the PsaE and PsaF subunits. The sequence is that of Photosystem I reaction center subunit IX from Lepidium virginicum (Virginia pepperweed).